A 327-amino-acid chain; its full sequence is Neurogenic differentiation factor 6-A (327 aa).

The disordered stretch occupies residues 17 to 85 (GANFPRDCVG…KKMTKARVDR (69 aa)). Residues 24–46 (CVGDLKGNKQEPFEKEETLSHVM) show a composition bias toward basic and acidic residues. A compositionally biased stretch (acidic residues) spans 47 to 63 (DDDDSEKDEDEREDGQD). Residues 68–80 (PRRRGPRKKKMTK) are compositionally biased toward basic residues. Residues 74-80 (RKKKMTK) carry the Nuclear localization signal motif. Residues 88–140 (VRRMEANARERNRMHGLNNALDSLRKVVPCYSKTQKLSKIETLRLAKNYIWAL) form the bHLH domain.

In terms of assembly, efficient DNA binding requires dimerization with another bHLH protein. In terms of tissue distribution, embryonic olfactory bulbs. In adult, expressed in brain, eye, intestine, muscle, ovary and skin.

The protein localises to the nucleus. Functionally, differentiation factor required for neurogenesis. Acts as an upstream activator of isl1. This is Neurogenic differentiation factor 6-A from Danio rerio (Zebrafish).